The sequence spans 496 residues: Cytochrome P450 71D180 (496 aa).

A helical; Signal-anchor for type II membrane protein membrane pass occupies residues Met-1–Met-21. Residue Cys-435 participates in heme binding. Residues Met-471–Ser-496 form a disordered region.

This sequence belongs to the cytochrome P450 family. Requires heme as cofactor. In terms of tissue distribution, mostly expressed in flowers and stems, and, to a lower extent, in leaves.

It is found in the membrane. The enzyme catalyses gamma-terpinene + 2 reduced [NADPH--hemoprotein reductase] + 2 O2 = carvacrol + 2 oxidized [NADPH--hemoprotein reductase] + 3 H2O + 2 H(+). The catalysed reaction is (4S)-limonene + reduced [NADPH--hemoprotein reductase] + O2 = (1S,5R)-carveol + oxidized [NADPH--hemoprotein reductase] + H2O + H(+). It carries out the reaction (4R)-limonene + reduced [NADPH--hemoprotein reductase] + O2 = (1R,5S)-carveol + oxidized [NADPH--hemoprotein reductase] + H2O + H(+). It functions in the pathway secondary metabolite biosynthesis; terpenoid biosynthesis. Functionally, involved in the biosynthesis of phenolic monoterpenes natural products thymol and carvacrol which have a broad range of biological activities acting as antimicrobial compounds, insecticides, antioxidants and pharmaceutical agents. Catalyzes the C2-hydroxylation of gamma-terpinene to produce carvacrol. Also mediates the C6-hydroxylation of (4S)-limonene and (4R)-limonene to form carveol. The chain is Cytochrome P450 71D180 from Origanum vulgare (Wild marjoram).